Consider the following 251-residue polypeptide: 3-isopropylmalate dehydratase small subunit 1 (251 aa).

A chloroplast-targeting transit peptide spans 1–59 (MAASLQSANPTLSRTLASPNKPSSFATFRSPFLRFNSTSVASNFKPLVSREASSSFVTR).

It belongs to the LeuD family. As to quaternary structure, heterodimer of the large LEUC/IIL1 subunit and the small LEUD (SSU1, SSU2 or SSU3) subunits. In terms of tissue distribution, expressed at low levels in roots, root tips, at the basis of the hypocotyls, and in emerging leaves. In young seedlings, expressed in cotyledon epidermal cells. In hypocotyls, expressed in peripheral cells. In seedling roots, expressed in the epidermis, including root hairs, and throughout the cortex. In rosette leaves, expressed in the upper and lower epidermis. In roots of adult plants, expressed in the root tips and cortex of the mature root enclosing the stele. In flowering stalks, expressed in the epidermis. Expressed in the carpel epidermis.

It localises to the plastid. The protein resides in the chloroplast stroma. The catalysed reaction is (2R,3S)-3-isopropylmalate = (2S)-2-isopropylmalate. It functions in the pathway amino-acid biosynthesis; L-leucine biosynthesis; L-leucine from 3-methyl-2-oxobutanoate: step 2/4. Catalyzes the isomerization between 2-isopropylmalate and 3-isopropylmalate, via the formation of 2-isopropylmaleate. Plays an essential role in leucine biosynthesis. Functions in both the biosynthesis of leucine, and in the methionine chain elongation pathway of aliphatic glucosinolate formation. Plays an essential role in female gametophyte development. In Arabidopsis thaliana (Mouse-ear cress), this protein is 3-isopropylmalate dehydratase small subunit 1.